We begin with the raw amino-acid sequence, 458 residues long: MNVILEQLKTHTQNKPNDIALHIDDETITYSQLNARITSAVESLQKYSLNPVVAINMKSPVQSIICYLALHRLHKVPMMMEGKWQSTIHRQLIEKYGIKDVIGDTGLMQNIDSPMFIDSTQLQHYPNLLHIGFTSGTTGLPKAYYRDEDSWLASFEVNEMLMLKNENAIAAPGPLSHSLTLYALLFALSSGRTFIGQTTFHPEKLLNQCHKISSYKVAMFLVPTMIKSLLLVYNNEHTIQSFFSSGDKLHSSIFKKIKNQANDINLIEFFGTSETSFISYNLNQQAPVESVGVLFPNVELKTTNHDHNGIGTICIKSNMMFSGYVSEQCINNDEWFVTNDNGYVKEQYLYLTGRQQDMLIIGGQNIYPAHVERLLTQSSSIDEAIIIGIPNERFGQIGVLLYSGDVTLTHKNVKQFLKKKVKRYEIPSMIHHVEKMYYTASGKIAREKMMSMYLRGEL.

It belongs to the ATP-dependent AMP-binding enzyme family.

The protein is Putative long chain fatty acid-CoA ligase VraA (vraA) of Staphylococcus aureus (strain Mu3 / ATCC 700698).